The sequence spans 225 residues: Germin-like protein 8-7 (225 aa).

The first 23 residues, 1 to 23 (MASPSSFCLLAVLLALVSWQAIA), serve as a signal peptide directing secretion. Cys33 and Cys48 form a disulfide bridge. One can recognise a Cupin type-1 domain in the interval 63 to 213 (AMLDTPRKTN…AFQVEKGTID (151 aa)). An N-linked (GlcNAc...) asparagine glycan is attached at Asn77. Mn(2+) contacts are provided by His110, His112, and Glu117. N-linked (GlcNAc...) asparagine glycosylation is present at Asn136. His158 contacts Mn(2+).

It belongs to the germin family. As to quaternary structure, oligomer (believed to be a pentamer but probably hexamer).

The protein localises to the secreted. It is found in the extracellular space. The protein resides in the apoplast. Its function is as follows. Plays a role in broad-spectrum disease resistance. Probably has no oxalate oxidase activity even if the active site is conserved. This chain is Germin-like protein 8-7 (GER6), found in Oryza sativa subsp. japonica (Rice).